The chain runs to 468 residues: 3-isopropylmalate dehydratase large subunit (468 aa).

3 residues coordinate [4Fe-4S] cluster: cysteine 349, cysteine 409, and cysteine 412.

This sequence belongs to the aconitase/IPM isomerase family. LeuC type 1 subfamily. Heterodimer of LeuC and LeuD. [4Fe-4S] cluster serves as cofactor.

It carries out the reaction (2R,3S)-3-isopropylmalate = (2S)-2-isopropylmalate. Its pathway is amino-acid biosynthesis; L-leucine biosynthesis; L-leucine from 3-methyl-2-oxobutanoate: step 2/4. In terms of biological role, catalyzes the isomerization between 2-isopropylmalate and 3-isopropylmalate, via the formation of 2-isopropylmaleate. This Nitrobacter winogradskyi (strain ATCC 25391 / DSM 10237 / CIP 104748 / NCIMB 11846 / Nb-255) protein is 3-isopropylmalate dehydratase large subunit.